The chain runs to 178 residues: Ribosome maturation factor RimM (178 aa).

The region spanning 100–173 (ADEYFIHQLY…QIVVRLLPGL (74 aa)) is the PRC barrel domain.

The protein belongs to the RimM family. Binds ribosomal protein uS19.

Its subcellular location is the cytoplasm. Functionally, an accessory protein needed during the final step in the assembly of 30S ribosomal subunit, possibly for assembly of the head region. Essential for efficient processing of 16S rRNA. May be needed both before and after RbfA during the maturation of 16S rRNA. It has affinity for free ribosomal 30S subunits but not for 70S ribosomes. The sequence is that of Ribosome maturation factor RimM from Roseiflexus castenholzii (strain DSM 13941 / HLO8).